The chain runs to 210 residues: MGSVVDAPVVVEGVAENMLGDKKVTVVFVLGGPGSGKGTQCANIVEHFGFTHLSAGDLLRAEIKSGSENGTMIENMIKEGKIVPSEVTIKLLQDAMIKNENDKFLIDGFPRNEENRAAFENVTKISPAFVLFFDCSEEEMERRLLGRNQGRVDDNIETIRKRFKVFVESSLPVIEHYNAKNKVKKIDAAKPISEVFEDVKAIFAPYAKVE.

Residue 34 to 39 coordinates ATP; sequence GSGKGT. Residues 54–83 are NMP; it reads SAGDLLRAEIKSGSENGTMIENMIKEGKIV. A ribonucleoside 5'-phosphate is bound by residues arginine 60, 81 to 83, and 108 to 111; these read KIV and GFPR. Asparagine 115 serves as a coordination point for CMP. The tract at residues 146 to 154 is LID; it reads GRNQGRVDD. Arginine 147 serves as a coordination point for ATP. Residues arginine 151 and arginine 162 each coordinate a ribonucleoside 5'-phosphate. Residue lysine 190 coordinates ATP.

This sequence belongs to the adenylate kinase family. UMP-CMP kinase subfamily. In terms of assembly, monomer. Mg(2+) serves as cofactor.

The protein localises to the cytoplasm. It localises to the nucleus. The enzyme catalyses UMP + ATP = UDP + ADP. It catalyses the reaction CMP + ATP = CDP + ADP. It carries out the reaction dCMP + ATP = dCDP + ADP. In terms of biological role, catalyzes the phosphorylation of pyrimidine nucleoside monophosphates at the expense of ATP. Plays an important role in de novo pyrimidine nucleotide biosynthesis. Has preference for UMP and CMP as phosphate acceptors. This Oryza sativa subsp. japonica (Rice) protein is UMP-CMP kinase 3 (URA6).